The sequence spans 118 residues: Non-specific lipid-transfer protein 1 (118 aa).

Positions 1–25 are cleaved as a signal peptide; sequence MASLRVSCLVALMCMVVISAPMAEA. 4 disulfide bridges follow: Cys29-Cys76, Cys39-Cys53, Cys54-Cys99, and Cys74-Cys113.

It belongs to the plant LTP family.

Plant non-specific lipid-transfer proteins transfer phospholipids as well as galactolipids across membranes. May play a role in wax or cutin deposition in the cell walls of expanding epidermal cells and certain secretory tissues. The chain is Non-specific lipid-transfer protein 1 from Lens culinaris (Lentil).